A 696-amino-acid chain; its full sequence is L-amino-acid oxidase (696 aa).

The propeptide occupies Met1 to Arg130. FAD-binding positions include Glu207, Arg215, Met236–Arg237, and Val440. Arg237 is a binding site for substrate. Tyr564 is a binding site for substrate. FAD is bound by residues Glu649 and Ile658 to Ala661.

The protein belongs to the flavin monoamine oxidase family. FAD serves as cofactor.

The enzyme catalyses an L-alpha-amino acid + O2 + H2O = a 2-oxocarboxylate + H2O2 + NH4(+). The chain is L-amino-acid oxidase (lox) from Neurospora crassa (strain ATCC 24698 / 74-OR23-1A / CBS 708.71 / DSM 1257 / FGSC 987).